The primary structure comprises 369 residues: Phosphate-binding protein PstS 3 (369 aa).

Residues 1 to 21 (MKLNQFGAAIGLLATGALLSG) form the signal peptide. C22 carries the N-palmitoyl cysteine lipid modification. C22 is lipidated: S-diacylglycerol cysteine. Phosphate contacts are provided by residues 55-57 (STA), S85, D103, and 190-192 (SGT).

Belongs to the PstS family. The complex is composed of two ATP-binding proteins (PstB), two transmembrane proteins (PstC and PstA) and a solute-binding protein (PstS).

It is found in the cell membrane. Its function is as follows. Part of the ABC transporter complex PstSACB involved in phosphate import. This is Phosphate-binding protein PstS 3 (pstS2) from Mycobacterium leprae (strain TN).